The primary structure comprises 248 residues: Adenosylcobinamide-GDP ribazoletransferase (248 aa).

8 consecutive transmembrane segments (helical) span residues 3–23 (ELKA…PINI), 35–55 (SYFP…YLLL), 63–83 (IVMT…HIDG), 109–129 (LGTN…LFLS), 135–155 (LLFS…VFSI), 180–199 (FVIA…PLKD), 200–219 (LALL…KYIS), and 228–248 (DTLG…FSIL).

The protein belongs to the CobS family. Mg(2+) serves as cofactor.

It localises to the cell membrane. The catalysed reaction is alpha-ribazole + adenosylcob(III)inamide-GDP = adenosylcob(III)alamin + GMP + H(+). It carries out the reaction alpha-ribazole 5'-phosphate + adenosylcob(III)inamide-GDP = adenosylcob(III)alamin 5'-phosphate + GMP + H(+). Its pathway is cofactor biosynthesis; adenosylcobalamin biosynthesis; adenosylcobalamin from cob(II)yrinate a,c-diamide: step 7/7. In terms of biological role, joins adenosylcobinamide-GDP and alpha-ribazole to generate adenosylcobalamin (Ado-cobalamin). Also synthesizes adenosylcobalamin 5'-phosphate from adenosylcobinamide-GDP and alpha-ribazole 5'-phosphate. This Caldanaerobacter subterraneus subsp. tengcongensis (strain DSM 15242 / JCM 11007 / NBRC 100824 / MB4) (Thermoanaerobacter tengcongensis) protein is Adenosylcobinamide-GDP ribazoletransferase.